We begin with the raw amino-acid sequence, 432 residues long: Asparagine--tRNA ligase (432 aa).

The protein belongs to the class-II aminoacyl-tRNA synthetase family. In terms of assembly, homodimer.

The protein resides in the cytoplasm. The enzyme catalyses tRNA(Asn) + L-asparagine + ATP = L-asparaginyl-tRNA(Asn) + AMP + diphosphate + H(+). This Lactobacillus johnsonii (strain CNCM I-12250 / La1 / NCC 533) protein is Asparagine--tRNA ligase.